The sequence spans 458 residues: MLLLLPEITLTLIALLGQFFAVIIPNKNRIISNIIILLCILSIFLTFKYSSYEGVWYSFATGINIGISKSIVLLFTIISMIIYRDYSILIAEELKFEFITLILLSVVGIFVAISSRNFLLLFCGMELTALTSYALAGFKLNDIKSSEGALKYFILGSLVSCLSLFGISFIYGFGGSLQFEDILYKLNNNSGMNLGLIIGIVLFLSSIFFKLSSVPLHFWVPDVYEGSPISSVTYFTAASKIGMVIVLLNISKLIIGNYYPINYNLIKIIAILSMLFGAFGAIRQTSLKRLMAYSTILNIGYVLIGVLLHNQEGYKAALLYILIYAVGSIGFFTCLIMLLGKDADKASFKTIQGIAENHKTIAAIISIVMFSMIGIPPLTGFFGKYYLFYQAINQEEFILAYCGIFTSVVAAFYYLKVVKAMYFSKKIEIIKLPMLYGLLLINYLVVGFLLLGSFIISF.

Helical transmembrane passes span 4–24 (LLPE…AVII), 30–50 (IISN…FKYS), 62–82 (GINI…SMII), 94–114 (LKFE…VAIS), 118–138 (FLLL…LAGF), 153–173 (FILG…IYGF), 194–214 (LGLI…LSSV), 235–255 (FTAA…KLII), 261–281 (INYN…AFGA), 290–310 (LMAY…LLHN), 318–338 (LLYI…LIML), 361–381 (IAAI…LTGF), 397–417 (FILA…YLKV), and 438–458 (LLLI…IISF).

The protein belongs to the complex I subunit 2 family. As to quaternary structure, NDH-1 is composed of 14 different subunits. Subunits NuoA, H, J, K, L, M, N constitute the membrane sector of the complex.

The protein resides in the cell inner membrane. It carries out the reaction a quinone + NADH + 5 H(+)(in) = a quinol + NAD(+) + 4 H(+)(out). In terms of biological role, NDH-1 shuttles electrons from NADH, via FMN and iron-sulfur (Fe-S) centers, to quinones in the respiratory chain. The immediate electron acceptor for the enzyme in this species is believed to be ubiquinone. Couples the redox reaction to proton translocation (for every two electrons transferred, four hydrogen ions are translocated across the cytoplasmic membrane), and thus conserves the redox energy in a proton gradient. This Rickettsia felis (strain ATCC VR-1525 / URRWXCal2) (Rickettsia azadi) protein is NADH-quinone oxidoreductase subunit N.